The sequence spans 472 residues: L-aspartate oxidase (472 aa).

FAD-binding positions include 7–10, S29, 36–37, 42–43, and D191; these read SGIA, ST, and GG. R257 acts as the Proton donor/acceptor in catalysis. FAD contacts are provided by residues E337 and 353–354; that span reads SL.

This sequence belongs to the FAD-dependent oxidoreductase 2 family. NadB subfamily. As to quaternary structure, monomer. The cofactor is FAD.

The protein localises to the cytoplasm. It catalyses the reaction L-aspartate + O2 = iminosuccinate + H2O2. Its pathway is cofactor biosynthesis; NAD(+) biosynthesis; iminoaspartate from L-aspartate (oxidase route): step 1/1. Functionally, catalyzes the oxidation of L-aspartate to iminoaspartate, the first step in the de novo biosynthesis of NAD(+). Can also use L-asparagine, but not L-phenylalanine, L-glutamate, glycine, L-proline, L-alanine and D-aspartate. The chain is L-aspartate oxidase from Sulfurisphaera tokodaii (strain DSM 16993 / JCM 10545 / NBRC 100140 / 7) (Sulfolobus tokodaii).